A 66-amino-acid polypeptide reads, in one-letter code: Large ribosomal subunit protein uL29 (66 aa).

Belongs to the universal ribosomal protein uL29 family.

This is Large ribosomal subunit protein uL29 from Thermotoga sp. (strain RQ2).